Here is a 95-residue protein sequence, read N- to C-terminus: YcgL domain-containing protein APJL_0712 (95 aa).

The region spanning 4–88 is the YcgL domain; that stretch reads HLCAIYKSPK…PPENLLKTFL (85 aa).

This is YcgL domain-containing protein APJL_0712 from Actinobacillus pleuropneumoniae serotype 3 (strain JL03).